The primary structure comprises 277 residues: Phosphoenolpyruvate synthase regulatory protein (277 aa).

157–164 (GVSRCGKT) serves as a coordination point for ADP.

Belongs to the pyruvate, phosphate/water dikinase regulatory protein family. PSRP subfamily.

The catalysed reaction is [pyruvate, water dikinase] + ADP = [pyruvate, water dikinase]-phosphate + AMP + H(+). It catalyses the reaction [pyruvate, water dikinase]-phosphate + phosphate + H(+) = [pyruvate, water dikinase] + diphosphate. Its function is as follows. Bifunctional serine/threonine kinase and phosphorylase involved in the regulation of the phosphoenolpyruvate synthase (PEPS) by catalyzing its phosphorylation/dephosphorylation. The chain is Phosphoenolpyruvate synthase regulatory protein from Escherichia coli O7:K1 (strain IAI39 / ExPEC).